A 148-amino-acid polypeptide reads, in one-letter code: Large-conductance mechanosensitive channel (148 aa).

Helical transmembrane passes span 14-34 (VVDM…INTL) and 85-105 (GIFV…FLSV).

It belongs to the MscL family. Homopentamer.

The protein resides in the cell inner membrane. Functionally, channel that opens in response to stretch forces in the membrane lipid bilayer. May participate in the regulation of osmotic pressure changes within the cell. The sequence is that of Large-conductance mechanosensitive channel from Chlorobium phaeobacteroides (strain DSM 266 / SMG 266 / 2430).